The sequence spans 343 residues: Cytoplasmic tRNA 2-thiolation protein 1 (343 aa).

The protein belongs to the TtcA family. CTU1/NCS6/ATPBD3 subfamily.

It localises to the cytoplasm. It functions in the pathway tRNA modification; 5-methoxycarbonylmethyl-2-thiouridine-tRNA biosynthesis. Its function is as follows. Plays a central role in 2-thiolation of mcm(5)S(2)U at tRNA wobble positions of tRNA(Lys), tRNA(Glu) and tRNA(Gln). Directly binds tRNAs and probably acts by catalyzing adenylation of tRNAs, an intermediate required for 2-thiolation. It is unclear whether it acts as a sulfurtransferase that transfers sulfur from thiocarboxylated URM1 onto the uridine of tRNAs at wobble position. The sequence is that of Cytoplasmic tRNA 2-thiolation protein 1 from Drosophila ananassae (Fruit fly).